Here is a 600-residue protein sequence, read N- to C-terminus: Cationic amino acid transporter 4, vacuolar (600 aa).

Residues 1–32 (MNSLVRRKQVDSVHLIKNDGPHQLAKKLSAVD) are Cytoplasmic-facing. The helical transmembrane segment at 33–53 (LVAIGVGTTIGAGVYILVGTV) threads the bilayer. Topologically, residues 54 to 60 (AREHTGP) are vacuolar. The helical transmembrane segment at 61–81 (ALAVSFFIAGVAAALSACCYA) threads the bilayer. Topologically, residues 82 to 92 (ELASRCPSAGS) are cytoplasmic. A helical transmembrane segment spans residues 93–115 (AYHYAYICLGEGIAWLVGWALVL). At 116–152 (DYTIGGSAIARGITPNLASFFGGLDNLPVFLARQTIP) the chain is on the vacuolar side. Residues 153-173 (GVGIVVDPCAALLIMIVTILL) traverse the membrane as a helical segment. The Cytoplasmic segment spans residues 174 to 184 (CFGIKESSTVQ). A helical transmembrane segment spans residues 185-205 (AIVTSVNVCTLVFIIVVGGYL). At 206-220 (ACKTGWVGYDLPSGY) the chain is on the vacuolar side. Residues 221-241 (FPFGLNGILAGSAVVFFSYIG) form a helical membrane-spanning segment. At 242 to 264 (FDTVTSTAEEVKNPQRDLPLGIG) the chain is on the cytoplasmic side. The chain crosses the membrane as a helical span at residues 265–285 (IALLICCILYMLLSVVIVGLV). The Vacuolar segment spans residues 286–308 (PYYSLNPDTPISSAFGDSGMQWA). Residues 309 to 329 (AYILTTGAITALCASLLGSLL) traverse the membrane as a helical segment. Residues 330 to 360 (AQPRIFMAMARDGLLPAFFSEISPRTQVPVK) lie on the Cytoplasmic side of the membrane. The chain crosses the membrane as a helical span at residues 361 to 381 (STIAIGVLAAALAFFMDVAQL). A topological domain (vacuolar) is located at residue Ser-382. Residues 383-403 (EMVSVGTLMAFTAVAVCVLVL) form a helical membrane-spanning segment. The Cytoplasmic segment spans residues 404 to 462 (RYVPPDGVPLSSSSQTLSDTDESRAETENFLVDAIESSDSPLLGNETARDEKYFGKRRK). A helical transmembrane segment spans residues 463-483 (IAAWSIALVCIGVLGLASAAS). The Vacuolar portion of the chain corresponds to 484–492 (AERLPSFPR). A helical membrane pass occupies residues 493 to 513 (FTICGVSAVILLGSLITLGYI). The Cytoplasmic segment spans residues 514-528 (DEDEERHNFGHKGGF). A helical transmembrane segment spans residues 529–549 (LCPFVPYLPVLCILINTYLII). A topological domain (vacuolar) is located at residue Asn-550. A helical membrane pass occupies residues 551–571 (IGAGTWIRVLIWLLIGSMIYI). Residues 572–600 (FYGRSHSLLNNAVYVPTMTCTRKTTDHLA) lie on the Cytoplasmic side of the membrane.

This sequence belongs to the amino acid-polyamine-organocation (APC) superfamily. Cationic amino acid transporter (CAT) (TC 2.A.3.3) family. In terms of tissue distribution, expressed in roots, stems, flowers, and leaves.

Its subcellular location is the vacuole membrane. Functionally, permease involved in the transport of the cationic amino acids. In Arabidopsis thaliana (Mouse-ear cress), this protein is Cationic amino acid transporter 4, vacuolar (CAT4).